The primary structure comprises 177 residues: Transcription termination/antitermination protein NusG (177 aa).

The region spanning 126–156 (PGETVRVIDGPFADFNGVVEEVNYEKSRIQV) is the KOW domain.

Belongs to the NusG family.

Participates in transcription elongation, termination and antitermination. This is Transcription termination/antitermination protein NusG from Pseudomonas aeruginosa (strain ATCC 15692 / DSM 22644 / CIP 104116 / JCM 14847 / LMG 12228 / 1C / PRS 101 / PAO1).